The following is a 347-amino-acid chain: LRP2-binding protein (347 aa).

Residues 59–92 form a TPR repeat; that stretch reads TLAYFLRGQLYFEEGWYEEALEQFEEIKEKDHQA. Sel1-like repeat units follow at residues 93–125, 133–168, 173–206, 207–242, 243–277, and 297–332; these read TYQL…DSPC, FAAA…DNGN, VKAQ…GNGN, LESQ…ERGN, VYAQ…EVHD, and AMAS…RLNP.

Interacts with LRP2.

It localises to the cytoplasm. Functionally, may act as an adapter that regulates LRP2 function. The protein is LRP2-binding protein (LRP2BP) of Homo sapiens (Human).